The primary structure comprises 345 residues: NADH-quinone oxidoreductase subunit H (345 aa).

Helical transmembrane passes span valine 13 to leucine 33, phenylalanine 84 to phenylalanine 104, valine 115 to glycine 135, isoleucine 161 to valine 181, leucine 190 to leucine 210, tyrosine 248 to serine 268, proline 277 to isoleucine 297, and leucine 309 to alanine 329.

It belongs to the complex I subunit 1 family. As to quaternary structure, NDH-1 is composed of 14 different subunits. Subunits NuoA, H, J, K, L, M, N constitute the membrane sector of the complex.

Its subcellular location is the cell inner membrane. The enzyme catalyses a quinone + NADH + 5 H(+)(in) = a quinol + NAD(+) + 4 H(+)(out). Its function is as follows. NDH-1 shuttles electrons from NADH, via FMN and iron-sulfur (Fe-S) centers, to quinones in the respiratory chain. The immediate electron acceptor for the enzyme in this species is believed to be ubiquinone. Couples the redox reaction to proton translocation (for every two electrons transferred, four hydrogen ions are translocated across the cytoplasmic membrane), and thus conserves the redox energy in a proton gradient. This subunit may bind ubiquinone. The chain is NADH-quinone oxidoreductase subunit H from Ruegeria sp. (strain TM1040) (Silicibacter sp.).